Reading from the N-terminus, the 413-residue chain is Short-chain specific acyl-CoA dehydrogenase, mitochondrial (413 aa).

The N-terminal 24 residues, 1-24 (MAAALLARACGPVRGALWPRDCRR), are a transit peptide targeting the mitochondrion. Residue Thr-27 is modified to Phosphothreonine. Position 51 is an N6-acetyllysine; alternate (Lys-51). Lys-51 is subject to N6-succinyllysine; alternate. Position 72 is an N6-acetyllysine (Lys-72). At Lys-129 the chain carries N6-acetyllysine; alternate. Lys-129 carries the post-translational modification N6-succinyllysine; alternate. FAD is bound by residues 152-161 (FALSEPGNGS) and 185-187 (WIT). Ser-161 contributes to the substrate binding site. An N6-acetyllysine modification is found at Lys-208. Lys-262 carries the N6-acetyllysine; alternate modification. An N6-succinyllysine; alternate modification is found at Lys-262. 269-272 (DMGR) is a substrate binding site. Arg-297 is an FAD binding site. Lys-306 is modified (N6-acetyllysine; alternate). An N6-succinyllysine; alternate modification is found at Lys-306. FAD-binding positions include Gln-308 and 366–370 (QILGG). Residue Glu-393 is the Proton acceptor of the active site. A substrate-binding site is contributed by Gly-394. 395-397 (TSE) contributes to the FAD binding site.

It belongs to the acyl-CoA dehydrogenase family. In terms of assembly, homotetramer. FAD is required as a cofactor.

The protein resides in the mitochondrion matrix. The catalysed reaction is a short-chain 2,3-saturated fatty acyl-CoA + oxidized [electron-transfer flavoprotein] + H(+) = a short-chain (2E)-enoyl-CoA + reduced [electron-transfer flavoprotein]. The enzyme catalyses butanoyl-CoA + oxidized [electron-transfer flavoprotein] + H(+) = (2E)-butenoyl-CoA + reduced [electron-transfer flavoprotein]. It catalyses the reaction pentanoyl-CoA + oxidized [electron-transfer flavoprotein] + H(+) = (2E)-pentenoyl-CoA + reduced [electron-transfer flavoprotein]. It carries out the reaction hexanoyl-CoA + oxidized [electron-transfer flavoprotein] + H(+) = (2E)-hexenoyl-CoA + reduced [electron-transfer flavoprotein]. The protein operates within lipid metabolism; mitochondrial fatty acid beta-oxidation. Functionally, short-chain specific acyl-CoA dehydrogenase is one of the acyl-CoA dehydrogenases that catalyze the first step of mitochondrial fatty acid beta-oxidation, an aerobic process breaking down fatty acids into acetyl-CoA and allowing the production of energy from fats. The first step of fatty acid beta-oxidation consists in the removal of one hydrogen from C-2 and C-3 of the straight-chain fatty acyl-CoA thioester, resulting in the formation of trans-2-enoyl-CoA. Among the different mitochondrial acyl-CoA dehydrogenases, short-chain specific acyl-CoA dehydrogenase acts specifically on acyl-CoAs with saturated 4 to 6 carbons long primary chains. The protein is Short-chain specific acyl-CoA dehydrogenase, mitochondrial (ACADS) of Sus scrofa (Pig).